The sequence spans 227 residues: Orotate phosphoribosyltransferase (227 aa).

Lys-26 contributes to the 5-phospho-alpha-D-ribose 1-diphosphate binding site. 34 to 35 (FF) lines the orotate pocket. 5-phospho-alpha-D-ribose 1-diphosphate contacts are provided by residues 72-73 (YK), Arg-98, Lys-99, Lys-102, His-104, and 123-131 (DDVVSAGLS). Ser-127 and Arg-155 together coordinate orotate.

Belongs to the purine/pyrimidine phosphoribosyltransferase family. PyrE subfamily. In terms of assembly, homodimer. Mg(2+) is required as a cofactor.

The catalysed reaction is orotidine 5'-phosphate + diphosphate = orotate + 5-phospho-alpha-D-ribose 1-diphosphate. The protein operates within pyrimidine metabolism; UMP biosynthesis via de novo pathway; UMP from orotate: step 1/2. In terms of biological role, catalyzes the transfer of a ribosyl phosphate group from 5-phosphoribose 1-diphosphate to orotate, leading to the formation of orotidine monophosphate (OMP). This is Orotate phosphoribosyltransferase from Nitrosomonas europaea (strain ATCC 19718 / CIP 103999 / KCTC 2705 / NBRC 14298).